Reading from the N-terminus, the 312-residue chain is Plasma membrane-associated coenzyme Q6 reductase PGA3 (312 aa).

At 1–15 (MSKEDIEGTNILDEP) the chain is on the extracellular side. A helical transmembrane segment spans residues 16–36 (VHGIYIPAALFVVGVAITTYM). Residues 37–39 (SGE) lie on the Cytoplasmic side of the membrane. Residues 40–60 (LKILWSLPILFMIIFVRAYSA) traverse the membrane as a helical segment. The Extracellular segment spans residues 61 to 179 (YKRRRSLYPD…LNYEPNSSKH (119 aa)). The FAD-binding FR-type domain maps to 70–173 (DRWTSLELED…KGPIGTLNYE (104 aa)). FAD-binding positions include 153 to 168 (AGLNSGDTVDFKGPIG) and 179 to 211 (HLGIVAGGSGITPVLQILNEIITVPEDLTKVSL). The chain crosses the membrane as a helical span at residues 180–200 (LGIVAGGSGITPVLQILNEII). The Cytoplasmic portion of the chain corresponds to 201 to 312 (TVPEDLTKVS…SSGDDQVFVF (112 aa)).

The protein belongs to the flavoprotein pyridine nucleotide cytochrome reductase family. It depends on FAD as a cofactor.

The protein resides in the cell membrane. Its subcellular location is the endoplasmic reticulum membrane. The catalysed reaction is 2 Fe(III)-[cytochrome b5] + NADH = 2 Fe(II)-[cytochrome b5] + NAD(+) + H(+). Inhibited by diphenylene iodonium (DPI). In terms of biological role, NADH-dependent cytochrome b5 reductase that reduces coenzyme Q6 at the plasma membrane and mediates lifespan extension by calorie restriction by shifting fermentative to respiratory metabolism, probably through modulating the NAD(+)/NADH ratio. The protein is Plasma membrane-associated coenzyme Q6 reductase PGA3 (PGA3) of Saccharomyces cerevisiae (strain ATCC 204508 / S288c) (Baker's yeast).